A 299-amino-acid chain; its full sequence is Dye-decolorizing peroxidase YfeX (299 aa).

Histidine 215 serves as a coordination point for heme.

This sequence belongs to the DyP-type peroxidase family. Requires heme b as cofactor.

The protein localises to the cytoplasm. Has both general peroxidase activity and dye-decolorizing activity. Can catalyze the oxidation of 2,2'-azino-bis(3-ethylbenzothiazoline-6-sulphonic acid) (ABTS), and the phenolic compounds guaiacol and catechol. Also decolorizes the anthraquinone dye reactive blue 19 (RB19). The chain is Dye-decolorizing peroxidase YfeX from Escherichia coli O157:H7.